The chain runs to 229 residues: tRNA (guanine-N(7)-)-methyltransferase (229 aa).

S-adenosyl-L-methionine-binding residues include Glu62, Glu87, Asp114, and Asp137. Asp137 is a catalytic residue. Lys141 contributes to the substrate binding site. Residues 143-148 form an interaction with RNA region; the sequence is KHNKRR. Residues Asp173 and 208-211 each bind substrate; that span reads TKFE.

The protein belongs to the class I-like SAM-binding methyltransferase superfamily. TrmB family.

The catalysed reaction is guanosine(46) in tRNA + S-adenosyl-L-methionine = N(7)-methylguanosine(46) in tRNA + S-adenosyl-L-homocysteine. The protein operates within tRNA modification; N(7)-methylguanine-tRNA biosynthesis. In terms of biological role, catalyzes the formation of N(7)-methylguanine at position 46 (m7G46) in tRNA. This chain is tRNA (guanine-N(7)-)-methyltransferase, found in Francisella philomiragia subsp. philomiragia (strain ATCC 25017 / CCUG 19701 / FSC 153 / O#319-036).